The chain runs to 776 residues: MRQNYDDRKIVKQYREIARQIVRKEGLYKNMDQDELREQTNFWREKFKTKPMTERDKINIFALAREAASRIIGLDAVVVQLIGALVLGDGKVAEMKTGEGKTLMSLFVMFIEVMRGNRVHLVTANEYLARRDREEIGQVLEYLGISVALNESGLDKDQKKAIYTADVIYGTASEFGFDYLRDNMVRQKEDKVQSGLDFVLIDEADSILIDEARTPLLISDRKEEDLSLYQTANELVQTMMKDDYEIEEHKRFVWLNDAGIERAQKFWGVESLYSAEAQVELRITMLLMRAHFLMHKDKDYVVLDGEVLIIDPHTGRALPGRRFNDGLHQAIEAKEGVEVKEESRTLATITIQNYFRMYKRLSGMTGTAKTEEEEFRQIYNMDVVVIPTNLRVNREDMPDDIFYTKKEKGRAIVYEVSWRYEKGQPTLIGTSSIKSNEWISSLLDAAGIPHQVLNAKNHAQEAEIIAKAGKRGMVTLATNMAGRGTDIKLDPDVHKLGGLAVIGTERHESRRIDLQLMGRSGRRGDPGFSKFMISLEDDLLEQFESKSWEKLSTKLKRKAPRDGKPVNSRKIHSVIVDAQKRLEGANYDIRKDLLSYDEVIDLQRKMVYKERDQLLERNKLGVSSEKILREVAEYSFIHPLELEEEELEKYYSRQKELLGGTKFPISFDQVTLMDPVEVVEEIVAWHKKERNKFPVETITAIEKEVYLNLMDQMWVMHLDAMVQLREGIHLRAYGQQDPLVMYQKEGAQLFEKFQADYHFYFAHALLELDPDGLIQG.

Residues Gln80, 98–102, and Asp486 each bind ATP; that span reads GEGKT.

Belongs to the SecA family. Monomer and homodimer. Part of the essential Sec protein translocation apparatus which comprises SecA, SecYEG and auxiliary proteins SecDF. Other proteins may also be involved.

The protein localises to the cell membrane. Its subcellular location is the cytoplasm. The catalysed reaction is ATP + H2O + cellular proteinSide 1 = ADP + phosphate + cellular proteinSide 2.. In terms of biological role, part of the Sec protein translocase complex. Interacts with the SecYEG preprotein conducting channel. Has a central role in coupling the hydrolysis of ATP to the transfer of proteins into and across the cell membrane, serving as an ATP-driven molecular motor driving the stepwise translocation of polypeptide chains across the membrane. The polypeptide is Protein translocase subunit SecA 2 (Listeria innocua serovar 6a (strain ATCC BAA-680 / CLIP 11262)).